We begin with the raw amino-acid sequence, 35 residues long: Photosystem II reaction center protein T (35 aa).

Residues 3–23 (ALVYTFLLVGTLGIIFFAIFF) traverse the membrane as a helical segment.

Belongs to the PsbT family. PSII is composed of 1 copy each of membrane proteins PsbA, PsbB, PsbC, PsbD, PsbE, PsbF, PsbH, PsbI, PsbJ, PsbK, PsbL, PsbM, PsbT, PsbY, PsbZ, Psb30/Ycf12, at least 3 peripheral proteins of the oxygen-evolving complex and a large number of cofactors. It forms dimeric complexes.

The protein localises to the plastid. It localises to the chloroplast thylakoid membrane. Found at the monomer-monomer interface of the photosystem II (PS II) dimer, plays a role in assembly and dimerization of PSII. PSII is a light-driven water plastoquinone oxidoreductase, using light energy to abstract electrons from H(2)O, generating a proton gradient subsequently used for ATP formation. The chain is Photosystem II reaction center protein T from Chaetosphaeridium globosum (Charophycean green alga).